The following is a 912-amino-acid chain: Protein translocase subunit SecA (912 aa).

Residues Gln87, 105–109 (GEGKT), and Asp499 contribute to the ATP site. The Zn(2+) site is built by Cys897, Cys899, Cys908, and His909.

The protein belongs to the SecA family. Monomer and homodimer. Part of the essential Sec protein translocation apparatus which comprises SecA, SecYEG and auxiliary proteins SecDF-YajC and YidC. It depends on Zn(2+) as a cofactor.

Its subcellular location is the cell inner membrane. The protein localises to the cytoplasm. It carries out the reaction ATP + H2O + cellular proteinSide 1 = ADP + phosphate + cellular proteinSide 2.. Its function is as follows. Part of the Sec protein translocase complex. Interacts with the SecYEG preprotein conducting channel. Has a central role in coupling the hydrolysis of ATP to the transfer of proteins into and across the cell membrane, serving both as a receptor for the preprotein-SecB complex and as an ATP-driven molecular motor driving the stepwise translocation of polypeptide chains across the membrane. This chain is Protein translocase subunit SecA, found in Rhizorhabdus wittichii (strain DSM 6014 / CCUG 31198 / JCM 15750 / NBRC 105917 / EY 4224 / RW1) (Sphingomonas wittichii).